The sequence spans 512 residues: Circadian clock oscillator protein KaiC (512 aa).

KaiC domains are found at residues 1-243 (MQFP…ISIF) and 257-512 (VRVS…SSED). ATP is bound by residues glycine 45, threonine 46, glycine 47, lysine 48, threonine 49, serine 85, lysine 220, leucine 221, arginine 222, threonine 224, histidine 226, threonine 286, glycine 287, threonine 288, glycine 289, lysine 290, threonine 291, and leucine 292. Threonine 49 serves as a coordination point for Mg(2+). Threonine 291 contacts Mg(2+). Glutamate 314 contributes to the Mg(2+) binding site. Tryptophan 327 is a binding site for ATP. Serine 427 carries the phosphoserine; by autocatalysis modification. The residue at position 428 (threonine 428) is a Phosphothreonine; by autocatalysis. Positions 447, 453, 454, 455, 457, 459, and 461 each coordinate ATP.

It belongs to the KaiC family. In terms of assembly, homohexamer; hexamerization is dependent on ATP-binding. The KaiABC complex composition changes during the circadian cycle to control KaiC phosphorylation. Complexes KaiC(6), KaiA(2-4):KaiC(6), KaiB(6):KaiC(6) and KaiC(6):KaiB(6):KaiA(12) are among the most important forms, many form cooperatively. KaiC interacts with SasA, activating its autokinase function and leading to RpaA activation. Mg(2+) is required as a cofactor. Phosphorylated on serine and threonine residues by autocatalysis. Has a 4 step phosphorylation cycle; the autokinase acts first on Thr-428, then Ser-427. When Ser-427 is modified KaiC switches to an autophosphatase mode, acting first on phospho-Thr-428 then phospho-Ser-427.

The catalysed reaction is L-seryl-[protein] + ATP = O-phospho-L-seryl-[protein] + ADP + H(+). It carries out the reaction L-threonyl-[protein] + ATP = O-phospho-L-threonyl-[protein] + ADP + H(+). The enzyme catalyses ATP + H2O = ADP + phosphate + H(+). With respect to regulation, the interaction with KaiA enhances its phosphorylation status, while the interaction with KaiB decreases it. Its function is as follows. Central component of the KaiABC oscillator complex, which constitutes the main circadian regulator in cyanobacteria. Complex composition changes during the circadian cycle to control KaiC phosphorylation. KaiA stimulates KaiC autophosphorylation, while KaiB sequesters KaiA, leading to KaiC autodephosphorylation. Clock output pathways impact the RpaA transcriptional regulator. KaiC enhances the autophosphorylation activity of SasA, which then transfers its phosphate group to RpaA to activate it. KaiB and KaiC together enhance the phospho-RpaA dephosphatase activity of CikA. In terms of biological role, has a weak, temperature-independent ATPase activity; ATPase activity defines the circadian period. The phosphorylation state of KaiC modulates its ATPase activity and effects KaiB binding. The polypeptide is Circadian clock oscillator protein KaiC (Parasynechococcus marenigrum (strain WH8102)).